Here is a 141-residue protein sequence, read N- to C-terminus: Small ribosomal subunit protein uS12 (141 aa).

This sequence belongs to the universal ribosomal protein uS12 family. As to quaternary structure, part of the 30S ribosomal subunit.

In terms of biological role, with S4 and S5 plays an important role in translational accuracy. Located at the interface of the 30S and 50S subunits. In Methanobrevibacter smithii (strain ATCC 35061 / DSM 861 / OCM 144 / PS), this protein is Small ribosomal subunit protein uS12.